Consider the following 283-residue polypeptide: Endochitinase At2g43620 (283 aa).

Positions 1 to 28 (MATLRAMLKNAFILFLFTLTIMAKTVFS) are cleaved as a signal peptide. Residues 29–66 (QQCGTTGCAANLCCSRYGYCGTTDAYCGTGCRSGPCSS) enclose the Chitin-binding type-1 domain. Intrachain disulfides connect C31/C42, C36/C48, C41/C55, and C59/C64. A catalytic region spans residues 88–283 (DTIENVVTPA…GITPGANLSC (196 aa)). Catalysis depends on E150, which acts as the Proton donor. N-linked (GlcNAc...) asparagine glycosylation is present at N280.

This sequence belongs to the glycosyl hydrolase 19 family. Chitinase class I subfamily.

The enzyme catalyses Random endo-hydrolysis of N-acetyl-beta-D-glucosaminide (1-&gt;4)-beta-linkages in chitin and chitodextrins.. The sequence is that of Endochitinase At2g43620 from Arabidopsis thaliana (Mouse-ear cress).